A 613-amino-acid chain; its full sequence is Dihydroxy-acid dehydratase (613 aa).

Residue aspartate 81 participates in Mg(2+) binding. Residue cysteine 122 coordinates [2Fe-2S] cluster. Mg(2+) contacts are provided by aspartate 123 and lysine 124. At lysine 124 the chain carries N6-carboxylysine. [2Fe-2S] cluster is bound at residue cysteine 193. Residue glutamate 489 coordinates Mg(2+). The active-site Proton acceptor is the serine 515.

The protein belongs to the IlvD/Edd family. As to quaternary structure, homodimer. The cofactor is [2Fe-2S] cluster. It depends on Mg(2+) as a cofactor.

The enzyme catalyses (2R)-2,3-dihydroxy-3-methylbutanoate = 3-methyl-2-oxobutanoate + H2O. It carries out the reaction (2R,3R)-2,3-dihydroxy-3-methylpentanoate = (S)-3-methyl-2-oxopentanoate + H2O. Its pathway is amino-acid biosynthesis; L-isoleucine biosynthesis; L-isoleucine from 2-oxobutanoate: step 3/4. It functions in the pathway amino-acid biosynthesis; L-valine biosynthesis; L-valine from pyruvate: step 3/4. In terms of biological role, functions in the biosynthesis of branched-chain amino acids. Catalyzes the dehydration of (2R,3R)-2,3-dihydroxy-3-methylpentanoate (2,3-dihydroxy-3-methylvalerate) into 2-oxo-3-methylpentanoate (2-oxo-3-methylvalerate) and of (2R)-2,3-dihydroxy-3-methylbutanoate (2,3-dihydroxyisovalerate) into 2-oxo-3-methylbutanoate (2-oxoisovalerate), the penultimate precursor to L-isoleucine and L-valine, respectively. The chain is Dihydroxy-acid dehydratase from Pseudomonas putida (strain W619).